Consider the following 217-residue polypeptide: MATPTEKQILTLAQWFSPAYPVGAFAYSHGLEWSVEAGDVVDARTAQAWITDVLQHGAGWNDCLFIGSAYRAASLQELKNINDTALAFSASSERMMETRLQGEAFCGITASVWPVDLAGLCYPVAVGRAANLVGLPLTLSGQFYLHAFMANLVTAATRLVPLGQTEGQQIIRDLTPLCQAIADTALCANLSHLTSTAFLGDIAAMKHETQYSRMFRT.

It belongs to the UreF family. As to quaternary structure, ureD, UreF and UreG form a complex that acts as a GTP-hydrolysis-dependent molecular chaperone, activating the urease apoprotein by helping to assemble the nickel containing metallocenter of UreC. The UreE protein probably delivers the nickel.

Its subcellular location is the cytoplasm. Required for maturation of urease via the functional incorporation of the urease nickel metallocenter. In Ruegeria pomeroyi (strain ATCC 700808 / DSM 15171 / DSS-3) (Silicibacter pomeroyi), this protein is Urease accessory protein UreF.